Reading from the N-terminus, the 470-residue chain is Glutamate--tRNA ligase (470 aa).

The short motif at 15-25 (PSPTGFLHIGG) is the 'HIGH' region element. Positions 240 to 244 (KLSKR) match the 'KMSKS' region motif. Lys-243 serves as a coordination point for ATP.

It belongs to the class-I aminoacyl-tRNA synthetase family. Glutamate--tRNA ligase type 1 subfamily. As to quaternary structure, monomer.

The protein resides in the cytoplasm. It carries out the reaction tRNA(Glu) + L-glutamate + ATP = L-glutamyl-tRNA(Glu) + AMP + diphosphate. Functionally, catalyzes the attachment of glutamate to tRNA(Glu) in a two-step reaction: glutamate is first activated by ATP to form Glu-AMP and then transferred to the acceptor end of tRNA(Glu). The sequence is that of Glutamate--tRNA ligase from Caulobacter vibrioides (strain ATCC 19089 / CIP 103742 / CB 15) (Caulobacter crescentus).